The chain runs to 336 residues: UDP-N-acetylglucosamine--N-acetylmuramyl-(pentapeptide) pyrophosphoryl-undecaprenol N-acetylglucosamine transferase (336 aa).

Residues 10–12, N124, R157, S179, and Q277 each bind UDP-N-acetyl-alpha-D-glucosamine; that span reads TGG.

It belongs to the glycosyltransferase 28 family. MurG subfamily.

The protein localises to the cell inner membrane. It catalyses the reaction di-trans,octa-cis-undecaprenyl diphospho-N-acetyl-alpha-D-muramoyl-L-alanyl-D-glutamyl-meso-2,6-diaminopimeloyl-D-alanyl-D-alanine + UDP-N-acetyl-alpha-D-glucosamine = di-trans,octa-cis-undecaprenyl diphospho-[N-acetyl-alpha-D-glucosaminyl-(1-&gt;4)]-N-acetyl-alpha-D-muramoyl-L-alanyl-D-glutamyl-meso-2,6-diaminopimeloyl-D-alanyl-D-alanine + UDP + H(+). The protein operates within cell wall biogenesis; peptidoglycan biosynthesis. Functionally, cell wall formation. Catalyzes the transfer of a GlcNAc subunit on undecaprenyl-pyrophosphoryl-MurNAc-pentapeptide (lipid intermediate I) to form undecaprenyl-pyrophosphoryl-MurNAc-(pentapeptide)GlcNAc (lipid intermediate II). The sequence is that of UDP-N-acetylglucosamine--N-acetylmuramyl-(pentapeptide) pyrophosphoryl-undecaprenol N-acetylglucosamine transferase from Wolinella succinogenes (strain ATCC 29543 / DSM 1740 / CCUG 13145 / JCM 31913 / LMG 7466 / NCTC 11488 / FDC 602W) (Vibrio succinogenes).